A 152-amino-acid chain; its full sequence is Putative rho GDP-dissociation inhibitor 2 (152 aa).

Belongs to the Rho GDI family.

The protein resides in the cytoplasm. Regulates the GDP/GTP exchange reaction of the Rho proteins by inhibiting the dissociation of GDP from them, and the subsequent binding of GTP to them. This Dictyostelium discoideum (Social amoeba) protein is Putative rho GDP-dissociation inhibitor 2 (rdiB).